We begin with the raw amino-acid sequence, 284 residues long: 2-dehydro-3-deoxyphosphooctonate aldolase (284 aa).

This sequence belongs to the KdsA family.

The protein localises to the cytoplasm. The enzyme catalyses D-arabinose 5-phosphate + phosphoenolpyruvate + H2O = 3-deoxy-alpha-D-manno-2-octulosonate-8-phosphate + phosphate. It functions in the pathway carbohydrate biosynthesis; 3-deoxy-D-manno-octulosonate biosynthesis; 3-deoxy-D-manno-octulosonate from D-ribulose 5-phosphate: step 2/3. It participates in bacterial outer membrane biogenesis; lipopolysaccharide biosynthesis. The chain is 2-dehydro-3-deoxyphosphooctonate aldolase from Escherichia coli O6:K15:H31 (strain 536 / UPEC).